A 626-amino-acid chain; its full sequence is Endogenous retrovirus group S71 member 1 Env polyprotein (626 aa).

Positions 1–38 (MGPEAWVRPLKTAPKPGEAIRLILFIYLSCFFLPVMSS) are cleaved as a signal peptide. Residues 39-438 (EPSYSFLLTS…PPELHPRLHQ (400 aa)) are surface protein. Residues 39-575 (EPSYSFLLTS…FNWNPWLTTL (537 aa)) lie on the Extracellular side of the membrane. The CXXC signature appears at 302–305 (CWLC). The segment at 439 to 459 (AVPLLVPLLAGLSIAGSAAIG) is fusion peptide. Positions 439–626 (AVPLLVPLLA…KTQYDTLVNN (188 aa)) are transmembrane protein. Residues 503-519 (LQNCRCLDLLFLSQGGL) carry the CKS-17 motif. Cys-520 and Cys-527 form a disulfide bridge. Residues 520-528 (CAALGESCC) carry the CX6CC motif. The chain crosses the membrane as a helical span at residues 576 to 596 (ITGLAGPLLILLLSLIFGPCI). Residues 597–626 (LNSFLNFIKQRIASVKLTYLKTQYDTLVNN) are Cytoplasmic-facing.

The protein belongs to the gamma type-C retroviral envelope protein family. HERV class-I T env subfamily. In terms of processing, the CXXC motif is highly conserved across a broad range of retroviral envelope proteins. It is thought to participate in the formation of a labile disulfide bond possibly with the CX6CC motif present in the transmembrane domain. As to expression, expressed at higher level in thyroid. Expressed at lower level in adrenal, bone marrow, brain, breast, kidney, ovary, placenta, prostate, skin, testis and trachea.

Its subcellular location is the cell membrane. Retroviral envelope proteins mediate receptor recognition and membrane fusion during early infection. Endogenous envelope proteins may have kept, lost or modified their original function during evolution. This endogenous envelope protein has lost its original fusogenic properties. The polypeptide is Endogenous retrovirus group S71 member 1 Env polyprotein (ERVS71-1) (Homo sapiens (Human)).